The chain runs to 51 residues: Sperm protamine P1 (51 aa).

Intrachain disulfides connect Cys-7–Cys-15 and Cys-38–Cys-48.

It belongs to the protamine P1 family. Cross-linked by interchain disulfide bonds around the DNA-helix. Phosphorylated by SRPK1. As to expression, testis.

The protein resides in the nucleus. Its subcellular location is the chromosome. Functionally, protamines substitute for histones in the chromatin of sperm during the haploid phase of spermatogenesis. They compact sperm DNA into a highly condensed, stable and inactive complex. The protein is Sperm protamine P1 (Prm1) of Rattus norvegicus (Rat).